A 154-amino-acid chain; its full sequence is Bacterial ferritin (154 aa).

The Ferritin-like diiron domain maps to Met-1 to Gly-145. Fe cation is bound by residues Glu-18, Glu-51, His-54, Glu-93, Glu-127, and His-130.

It belongs to the bacterioferritin family. As to quaternary structure, heterooligomer of 24 subunits, arranged as 12 dimers, that are packed together to form an approximately spherical molecule with a central cavity, in which large amounts of iron can be deposited.

It catalyses the reaction 4 Fe(2+) + O2 + 4 H(+) = 4 Fe(3+) + 2 H2O. The enzyme catalyses Fe(2+)(in) = Fe(2+)(out). Its function is as follows. Iron-storage protein, whose ferroxidase center binds Fe(2+), oxidizes it using dioxygen to Fe(3+), and participates in the subsequent Fe(3+) oxide mineral core formation within the central cavity of the BFR protein shell. In Neisseria meningitidis serogroup A / serotype 4A (strain DSM 15465 / Z2491), this protein is Bacterial ferritin (bfrA).